A 119-amino-acid chain; its full sequence is Holo-[acyl-carrier-protein] synthase (119 aa).

2 residues coordinate Mg(2+): Asp-5 and Glu-51.

It belongs to the P-Pant transferase superfamily. AcpS family. The cofactor is Mg(2+).

The protein localises to the cytoplasm. The enzyme catalyses apo-[ACP] + CoA = holo-[ACP] + adenosine 3',5'-bisphosphate + H(+). Functionally, transfers the 4'-phosphopantetheine moiety from coenzyme A to a Ser of acyl-carrier-protein. This Helicobacter pylori (strain ATCC 700392 / 26695) (Campylobacter pylori) protein is Holo-[acyl-carrier-protein] synthase.